Consider the following 216-residue polypeptide: Pyrophosphatase PpaX (216 aa).

Aspartate 12 acts as the Nucleophile in catalysis.

Belongs to the HAD-like hydrolase superfamily. PpaX family. It depends on Mg(2+) as a cofactor.

The catalysed reaction is diphosphate + H2O = 2 phosphate + H(+). Functionally, hydrolyzes pyrophosphate formed during P-Ser-HPr dephosphorylation by HPrK/P. Might play a role in controlling the intracellular pyrophosphate pool. The sequence is that of Pyrophosphatase PpaX from Bacillus velezensis (strain DSM 23117 / BGSC 10A6 / LMG 26770 / FZB42) (Bacillus amyloliquefaciens subsp. plantarum).